A 92-amino-acid polypeptide reads, in one-letter code: Alpha-conotoxin-like Rt20.1 (92 aa).

An N-terminal signal peptide occupies residues 1 to 24; the sequence is MPKLEMMLLVLLILPLSYFSAAGG. The propeptide occupies 25–45; the sequence is QVVQGDLRSDVLARYLQRGDR. Glu-49 carries the post-translational modification 4-carboxyglutamate. Pro-55 bears the 4-hydroxyproline mark. Cystine bridges form between Cys-63–Cys-72, Cys-68–Cys-80, Cys-73–Cys-90, and Cys-78–Cys-92.

It belongs to the conotoxin D superfamily. Hetero-, homo- or pseudo-homodimer (identical sequence, different post-translational modifications). In terms of tissue distribution, expressed by the venom duct.

It is found in the secreted. Its function is as follows. Alpha-conotoxins act on postsynaptic membranes, they bind to the nicotinic acetylcholine receptors (nAChR) and thus inhibit them. Through its two C-terminal domains, this homodimeric protein would bind to two nAChR allosteric sites, located outside the nAChR C-loop of the principal binding face and at the adjacent binding interface in a clockwise direction. This toxin specifically blocks mammalian neuronal nAChR of the alpha-7/CHRNA7, alpha-3-beta-2/CHRNA3-CHRNB2 and alpha-4-beta-2/CHRNA4-CHRNB2 subtypes. The chain is Alpha-conotoxin-like Rt20.1 from Conus rattus (Rat cone).